A 152-amino-acid chain; its full sequence is MSRPRRELPQPLKRLLKLRLLLKRKKPEFVRIDQWRYKRIEDSGWRNTRSIDNKIRRKWKGWPKPVEVGYRKPAAVRGLHPSGFVEVLVHNVEELAKLDPKTHAIRIGRTVGLRKRIEIVKRAREMGFYVLNPGKRVEEALKKELNTAQTGQ.

It belongs to the eukaryotic ribosomal protein eL32 family.

This is Large ribosomal subunit protein eL32 (rpl32e) from Pyrobaculum aerophilum (strain ATCC 51768 / DSM 7523 / JCM 9630 / CIP 104966 / NBRC 100827 / IM2).